Consider the following 444-residue polypeptide: uncharacterized protein (444 aa).

Helical transmembrane passes span 9–29 (LIVSLLLGAILVPINSTMIAV), 42–62 (IASITWVVTVYLIVMAVTQPI), 82–102 (LFLIASLGCALSPSLLLLIVF), 104–126 (ALQAVGGALLTPNSIAIIRHVVS), 136–156 (FFGLGAGLGAALGPFIGSILI), 164–184 (IFWVNIPFLAIALFTALTMFP), 193–213 (APLDIIGSLLLAGSIVSIILL), 217–237 (EAPWGYTVYSVLILLFVPLFF), 263–283 (LSVLLSNLMMYAVLLIMPLFM), 295–315 (GMALSVFSIFMSASNWVGAQL), 324–344 (IIFLSFAMMAGANLLFLLLSS), 347–367 (SVLFLMLSLILGGLASGVGLT), 387–407 (GIFSTFRYFGSIISSALIGLI), and 411–431 (HTLFMILFAVSIIGVFVSLGI).

The protein belongs to the major facilitator superfamily. TCR/Tet family.

It localises to the cell membrane. This is an uncharacterized protein from Bacillus subtilis (strain 168).